The primary structure comprises 315 residues: 3-chlorobenzoate-3,4-dioxygenase reductase subunit (315 aa).

1–103 contributes to the FMN binding site; the sequence is MVAIDQHDTY…GATTRISAPR (103 aa). An FAD-binding FR-type domain is found at 7–109; sequence HDTYSVRVIS…SAPRNAFALD (103 aa). The 2Fe-2S ferredoxin-type domain occupies 228-315; sequence NEFTVNLARS…ALSPELTLDL (88 aa). [2Fe-2S] cluster is bound by residues Cys264, Cys269, Cys272, and Cys302.

Belongs to the PDR/VanB family. This dioxygenase system consists of two proteins: phthalate oxygenase and phthalate oxygenase reductase. Requires FMN as cofactor.

The sequence is that of 3-chlorobenzoate-3,4-dioxygenase reductase subunit (cbaB) from Comamonas testosteroni (Pseudomonas testosteroni).